Consider the following 105-residue polypeptide: Nucleoid-associated protein MXAN_1931 (105 aa).

Belongs to the YbaB/EbfC family. In terms of assembly, homodimer.

It is found in the cytoplasm. It localises to the nucleoid. Its function is as follows. Binds to DNA and alters its conformation. May be involved in regulation of gene expression, nucleoid organization and DNA protection. In Myxococcus xanthus (strain DK1622), this protein is Nucleoid-associated protein MXAN_1931.